Consider the following 405-residue polypeptide: Protein NDRG4 (405 aa).

Positions 352 to 405 are disordered; that stretch reads AGAVPSASMTRLARSRTASLTSASSVDGARPRPCTQSESSDGIGQINHTMEVSC. Residues 361–376 are compositionally biased toward low complexity; sequence TRLARSRTASLTSASS. Residues 385-405 show a composition bias toward polar residues; the sequence is CTQSESSDGIGQINHTMEVSC.

This sequence belongs to the NDRG family.

The protein localises to the cytoplasm. Its subcellular location is the cytosol. Its function is as follows. Contributes to the maintenance of intracerebral BDNF levels within the normal range. May enhance growth factor-induced ERK1 and ERK2 phosphorylation. May attenuate growth factor-promoted ELK1 phosphorylation in a microtubule-dependent manner. The protein is Protein NDRG4 of Xenopus tropicalis (Western clawed frog).